The following is a 206-amino-acid chain: Large ribosomal subunit protein uL4 (206 aa).

A disordered region spans residues 45-76 (RQGTQSAKTRTEVSGGGIKPWRQKGTGRARQG).

This sequence belongs to the universal ribosomal protein uL4 family. As to quaternary structure, part of the 50S ribosomal subunit.

Functionally, one of the primary rRNA binding proteins, this protein initially binds near the 5'-end of the 23S rRNA. It is important during the early stages of 50S assembly. It makes multiple contacts with different domains of the 23S rRNA in the assembled 50S subunit and ribosome. Forms part of the polypeptide exit tunnel. This is Large ribosomal subunit protein uL4 from Clostridium acetobutylicum (strain ATCC 824 / DSM 792 / JCM 1419 / IAM 19013 / LMG 5710 / NBRC 13948 / NRRL B-527 / VKM B-1787 / 2291 / W).